Here is a 359-residue protein sequence, read N- to C-terminus: 3-dehydroquinate synthase (359 aa).

NAD(+)-binding positions include 71–76, 105–109, 129–130, Lys-142, Lys-151, and 169–172; these read DGEAHK, GVIGD, TT, and TLHT. The Zn(2+) site is built by Glu-184, His-247, and His-264.

Belongs to the sugar phosphate cyclases superfamily. Dehydroquinate synthase family. The cofactor is Co(2+). It depends on Zn(2+) as a cofactor. NAD(+) serves as cofactor.

The protein localises to the cytoplasm. The enzyme catalyses 7-phospho-2-dehydro-3-deoxy-D-arabino-heptonate = 3-dehydroquinate + phosphate. It functions in the pathway metabolic intermediate biosynthesis; chorismate biosynthesis; chorismate from D-erythrose 4-phosphate and phosphoenolpyruvate: step 2/7. Catalyzes the conversion of 3-deoxy-D-arabino-heptulosonate 7-phosphate (DAHP) to dehydroquinate (DHQ). The sequence is that of 3-dehydroquinate synthase from Neisseria gonorrhoeae (strain ATCC 700825 / FA 1090).